The primary structure comprises 307 residues: MQHNRYLKWFAVAATVGMLLILLGGALVTKTDSGLGCGRNWPDCNGSLIPKEITPEVLIEFSHRLVTGVVSISILVLTVWTWRKLGHIREVKLLGFLAMFFLIAQALIGAAQVLWGQGDFILALHFGISLISFAAVLLLSMIVFEVDRKFDADNVFIGKKLRWHTIAVTIYSYLVVYTGALVRHTDSSLICPDWPFCYNETPLASPNNMYEWVQMGHRLAVLIIFIWIAYITWHAVKEYKNQRVVYYGWIIAFTIVFLQVIAGMLVVLTKLNLTVALMHSLLISLLFGLLCYMIMLVARSNYNEKMK.

Residues 1 to 8 lie on the Cytoplasmic side of the membrane; sequence MQHNRYLK. The chain crosses the membrane as a helical span at residues 9 to 29; the sequence is WFAVAATVGMLLILLGGALVT. Topologically, residues 30–56 are extracellular; sequence KTDSGLGCGRNWPDCNGSLIPKEITPE. C37 and C44 form a disulfide bridge. The helical transmembrane segment at 57–77 threads the bilayer; that stretch reads VLIEFSHRLVTGVVSISILVL. The active site involves E60. Heme o is bound at residue H63. The Cytoplasmic portion of the chain corresponds to 78–92; sequence TVWTWRKLGHIREVK. The helical transmembrane segment at 93–113 threads the bilayer; the sequence is LLGFLAMFFLIAQALIGAAQV. Over 114 to 123 the chain is Extracellular; sequence LWGQGDFILA. A helical transmembrane segment spans residues 124–144; it reads LHFGISLISFAAVLLLSMIVF. Residue H125 coordinates heme o. Topologically, residues 145–161 are cytoplasmic; it reads EVDRKFDADNVFIGKKL. The helical transmembrane segment at 162–182 threads the bilayer; the sequence is RWHTIAVTIYSYLVVYTGALV. Residues 183–218 are Extracellular-facing; sequence RHTDSSLICPDWPFCYNETPLASPNNMYEWVQMGHR. A disulfide bridge links C191 with C197. Residue H217 participates in heme b binding. A helical membrane pass occupies residues 219 to 239; that stretch reads LAVLIIFIWIAYITWHAVKEY. At 240–247 the chain is on the cytoplasmic side; that stretch reads KNQRVVYY. Residues 248–268 form a helical membrane-spanning segment; that stretch reads GWIIAFTIVFLQVIAGMLVVL. The Extracellular portion of the chain corresponds to 269–276; it reads TKLNLTVA. The chain crosses the membrane as a helical span at residues 277–297; the sequence is LMHSLLISLLFGLLCYMIMLV. Residue H279 participates in heme b binding. Topologically, residues 298-307 are cytoplasmic; that stretch reads ARSNYNEKMK.

The protein belongs to the COX15/CtaA family. Type 1 subfamily. In terms of assembly, interacts with CtaB. The cofactor is heme b.

The protein resides in the cell membrane. It catalyses the reaction Fe(II)-heme o + 2 A + H2O = Fe(II)-heme a + 2 AH2. The protein operates within porphyrin-containing compound metabolism; heme A biosynthesis; heme A from heme O: step 1/1. Catalyzes the conversion of heme O to heme A by two successive hydroxylations of the methyl group at C8. The first hydroxylation forms heme I, the second hydroxylation results in an unstable dihydroxymethyl group, which spontaneously dehydrates, resulting in the formyl group of heme A. The polypeptide is Heme A synthase (Lysinibacillus sphaericus (strain C3-41)).